We begin with the raw amino-acid sequence, 257 residues long: Gamma-secretase subunit APH-1B (257 aa).

7 helical membrane passes run 5–25, 32–52, 70–90, 115–135, 158–178, 186–206, and 213–233; these read VFFGCAFIAFGPALALYVFTI, IIFLIAGAFFWLVSLLISSLV, YLLIFGTFVSVYIQEMFRFAY, LLAYVSGLGFGIMSGVFSFVN, YSAFMTLVIILLHVFWGIVFF, WGILLIVLLTHLLVSAQTFIS, and LASAFIILVLMGTWAFLAAGG.

This sequence belongs to the APH-1 family. In terms of assembly, probable component of the gamma-secretase complex, a complex composed of a presenilin homodimer (PSEN1 or PSEN2), nicastrin (NCSTN), APH1 (APH1A or APH1B) and PEN2. Such minimal complex is sufficient for secretase activity, although other components may exist. Interacts with PSEN1 and PSEN2.

The protein resides in the membrane. In terms of biological role, probable subunit of the gamma-secretase complex, an endoprotease complex that catalyzes the intramembrane cleavage of integral proteins such as Notch receptors and APP (amyloid-beta precursor protein). It probably represents a stabilizing cofactor for the presenilin homodimer that promotes the formation of a stable complex. Probably present in a minority of gamma-secretase complexes compared to APH1A. In Pongo abelii (Sumatran orangutan), this protein is Gamma-secretase subunit APH-1B (APH1B).